Here is a 118-residue protein sequence, read N- to C-terminus: NADH-quinone oxidoreductase subunit A (118 aa).

A run of 3 helical transmembrane segments spans residues 5–25 (YAFI…PLVL), 62–82 (LYAL…PWAV), and 87–107 (LGLF…IGLV).

It belongs to the complex I subunit 3 family. As to quaternary structure, NDH-1 is composed of 14 different subunits. Subunits NuoA, H, J, K, L, M, N constitute the membrane sector of the complex.

The protein resides in the cell membrane. It carries out the reaction a quinone + NADH + 5 H(+)(in) = a quinol + NAD(+) + 4 H(+)(out). Functionally, NDH-1 shuttles electrons from NADH, via FMN and iron-sulfur (Fe-S) centers, to quinones in the respiratory chain. The immediate electron acceptor for the enzyme in this species is believed to be ubiquinone. Couples the redox reaction to proton translocation (for every two electrons transferred, four hydrogen ions are translocated across the cytoplasmic membrane), and thus conserves the redox energy in a proton gradient. In Herpetosiphon aurantiacus (strain ATCC 23779 / DSM 785 / 114-95), this protein is NADH-quinone oxidoreductase subunit A.